The chain runs to 337 residues: 2-oxoglutarate-dependent dioxygenase frbA (337 aa).

One can recognise a Fe2OG dioxygenase domain in the interval cysteine 175–proline 290. The Fe cation site is built by histidine 202, aspartate 204, and histidine 262. Arginine 281 serves as a coordination point for 2-oxoglutarate.

This sequence belongs to the iron/ascorbate-dependent oxidoreductase family. The cofactor is Fe(2+).

It participates in antifungal biosynthesis. In terms of biological role, 2-oxoglutarate-dependent dioxygenase; part of the gene cluster that mediates the biosynthesis of the antifungal antibiotic FR901469, an inhibitor of beta-1,3-glucansynthase, exerting antifungal activity against the pathogenes Candida albicans and Aspergillus fumigatus. FR901469 is a cyclic depsipeptide containing 12 amino acid residues and a fatty acid chain. The NRPS frbI contains 12 modules responsible for the formation of the depsipeptide backbone which is denoted as Acyl-Thr-Ala-Tyr-Val-4OHPro-Thr-Thr-3OHPro-threo3OHGln-Gly-Thr-Orn-OH (C71H116N14O23). The PKS frbB is probably involved in the production of the hydrocarbon chain, and the acyl-CoA ligase frbC might be involved in the transport of the chain to the peptide ptoduct of frbI. Because FR901469 contains 3 hydroxylated amino acid residues, the 3 oxygenases frbA, frbH, and frbJ might be participating in amino acid hydroxylation. As no thioesterase domains were detected in frbI or frbB, the thioesterases frbD and frbE may instead release and cyclize the products of the NRPS and PKS, respectively. This is 2-oxoglutarate-dependent dioxygenase frbA from Dothideomycetidae sp. (strain 11243) (Fungal sp. (strain No.11243)).